The following is a 483-amino-acid chain: tRNA sulfurtransferase (483 aa).

Residues 61-165 form the THUMP domain; it reads EAVCDALTRI…DDKLILVNAR (105 aa). ATP is bound by residues 183 to 184, Lys265, Gly287, and Gln296; that span reads LI. An intrachain disulfide couples Cys344 to Cys456. Residues 404–483 enclose the Rhodanese domain; it reads FATNDVVLDI…FNNVKVYRKK (80 aa). Cys456 functions as the Cysteine persulfide intermediate in the catalytic mechanism.

The protein belongs to the ThiI family.

It localises to the cytoplasm. It carries out the reaction [ThiI sulfur-carrier protein]-S-sulfanyl-L-cysteine + a uridine in tRNA + 2 reduced [2Fe-2S]-[ferredoxin] + ATP + H(+) = [ThiI sulfur-carrier protein]-L-cysteine + a 4-thiouridine in tRNA + 2 oxidized [2Fe-2S]-[ferredoxin] + AMP + diphosphate. The catalysed reaction is [ThiS sulfur-carrier protein]-C-terminal Gly-Gly-AMP + S-sulfanyl-L-cysteinyl-[cysteine desulfurase] + AH2 = [ThiS sulfur-carrier protein]-C-terminal-Gly-aminoethanethioate + L-cysteinyl-[cysteine desulfurase] + A + AMP + 2 H(+). It participates in cofactor biosynthesis; thiamine diphosphate biosynthesis. Catalyzes the ATP-dependent transfer of a sulfur to tRNA to produce 4-thiouridine in position 8 of tRNAs, which functions as a near-UV photosensor. Also catalyzes the transfer of sulfur to the sulfur carrier protein ThiS, forming ThiS-thiocarboxylate. This is a step in the synthesis of thiazole, in the thiamine biosynthesis pathway. The sulfur is donated as persulfide by IscS. The sequence is that of tRNA sulfurtransferase from Proteus mirabilis (strain HI4320).